The following is a 69-amino-acid chain: Putative membrane protein insertion efficiency factor (69 aa).

The protein belongs to the UPF0161 family.

It localises to the cell membrane. In terms of biological role, could be involved in insertion of integral membrane proteins into the membrane. In Thermoanaerobacter pseudethanolicus (strain ATCC 33223 / 39E) (Clostridium thermohydrosulfuricum), this protein is Putative membrane protein insertion efficiency factor.